We begin with the raw amino-acid sequence, 375 residues long: uncharacterized protein (375 aa).

One can recognise a GP-PDE domain in the interval 52–301 (VLLSAHRGSW…KQGFATYHES (250 aa)).

This is an uncharacterized protein from Sinorhizobium fredii (strain NBRC 101917 / NGR234).